The sequence spans 1311 residues: Zinc finger protein 521 (1311 aa).

A C2H2-type 1; degenerate zinc finger spans residues 47–67 (HSCDSCLQVFESLSDITEHKI). Residues 81–108 (DPSCSWPASSPSSKDQTSPSHGEGCDFG) are disordered. The span at 83–102 (SCSWPASSPSSKDQTSPSHG) shows a compositional bias: low complexity. 7 consecutive C2H2-type zinc fingers follow at residues 118–140 (YPCQ…EQSH), 146–168 (FKCT…IKLH), 174–196 (YHCS…LKTH), 202–224 (YKCA…MQVH), 246–269 (QKCS…AECH), 281–304 (LQCM…EQVH), and 310–332 (NSCS…MDSH). Positions 357–398 (TTPDSNLSVDSSTMVEAAPPIPKSRGRKRAAQQTSDMTGPSS) are disordered. Composition is skewed to polar residues over residues 359–370 (PDSNLSVDSSTM) and 387–398 (AQQTSDMTGPSS). The C2H2-type 9; degenerate zinc-finger motif lies at 405 to 429 (YSCIYCNKQLFSSLAVLQIHLKTMH). 3 C2H2-type zinc fingers span residues 437-460 (HICQ…KQVH), 477-500 (YQCN…RCSH), and 513-536 (FFCP…RQVH). The residue at position 546 (serine 546) is a Phosphoserine. The segment at 560-585 (YSCSYCTNSPIFNSVLKLNKHIKENH) adopts a C2H2-type 13; atypical zinc-finger fold. 2 positions are modified to phosphoserine: serine 605 and serine 608. C2H2-type zinc fingers lie at residues 634–656 (YICN…LKTH), 664–686 (LTCP…VTIH), 694–717 (YICE…LDMH), 722–745 (FRCT…AVKH), 752–775 (YRCT…KHNH), 783–805 (HKCI…ITTH), and 809–832 (YNCR…REKH). A disordered region spans residues 863–883 (TNSQESHNSHDGSEEDVDSSE). A C2H2-type 21; degenerate zinc finger spans residues 886 to 908 (YGCDICGAAYTMETLLQNHQLRD). 3 consecutive C2H2-type zinc fingers follow at residues 930 to 952 (YKCN…MQTH), 959 to 981 (YMCP…KVTH), and 1020 to 1042 (FRCV…GTFH). The segment at 1065–1083 (YKCASCLKEFRSKQDLVKL) adopts a C2H2-type 25; degenerate zinc-finger fold. A compositionally biased stretch (low complexity) spans 1105–1119 (PGLSLPPGASRPGLG). The disordered stretch occupies residues 1105–1136 (PGLSLPPGASRPGLGQNESLSAMEGKGKAGGL). 5 C2H2-type zinc fingers span residues 1138–1161 (TRCS…QTVH), 1195–1217 (YQCI…VANH), 1225–1247 (HECK…LIEH), 1256–1279 (FKCP…FSAH), and 1286–1309 (YDCT…MTQH). Lysine 1146 is covalently cross-linked (Glycyl lysine isopeptide (Lys-Gly) (interchain with G-Cter in SUMO2)).

Belongs to the krueppel C2H2-type zinc-finger protein family. In terms of assembly, interacts with EBF1. Interacts with SMAD1 and SMAD4. Widely expressed. Expressed in all B-cell stages.

Its subcellular location is the nucleus. Its function is as follows. Transcription factor that can both act as an activator or a repressor depending on the context. Involved in BMP signaling and in the regulation of the immature compartment of the hematopoietic system. Associates with SMADs in response to BMP2 leading to activate transcription of BMP target genes. Acts as a transcriptional repressor via its interaction with EBF1, a transcription factor involved specification of B-cell lineage; this interaction preventing EBF1 to bind DNA and activate target genes. The polypeptide is Zinc finger protein 521 (Znf521) (Mus musculus (Mouse)).